Reading from the N-terminus, the 118-residue chain is Fluoride-specific ion channel FluC 2 (118 aa).

A run of 4 helical transmembrane segments spans residues 1–21 (MIEALLVATGGFFGAITRFAI), 33–53 (FPIATFLINITGAFLLGYIIG), 55–75 (GVTTGWQLLLGTGFMGAFTTF), and 93–113 (TFLLYLSATYIVGILFAFLGM). Na(+)-binding residues include Gly70 and Thr73.

It belongs to the fluoride channel Fluc/FEX (TC 1.A.43) family.

It localises to the cell membrane. The catalysed reaction is fluoride(in) = fluoride(out). Its activity is regulated as follows. Na(+) is not transported, but it plays an essential structural role and its presence is essential for fluoride channel function. In terms of biological role, fluoride-specific ion channel. Important for reducing fluoride concentration in the cell, thus reducing its toxicity. The protein is Fluoride-specific ion channel FluC 2 of Bacillus thuringiensis subsp. konkukian (strain 97-27).